The primary structure comprises 224 residues: Elongation factor 1-beta 2 (224 aa).

An N-acetylalanine modification is found at A2. A GST C-terminal domain is found at 14-65; sequence VKSVEEHLAGKTYISGDQLSVDDVKVYAAVPVKPSDAFPNASKWYESVASQL. The interval 89 to 139 is disordered; the sequence is EAEAPAAAADDDDDMDLFGDETEEEKKAAEEREAAKKDTKKPKESGKSSVL. A compositionally biased stretch (acidic residues) spans 97-111; that stretch reads ADDDDDMDLFGDETE. The segment covering 112–134 has biased composition (basic and acidic residues); sequence EEKKAAEEREAAKKDTKKPKESG.

This sequence belongs to the EF-1-beta/EF-1-delta family. In terms of assembly, EF-1 is composed of 4 subunits: alpha, beta (1B-alpha=beta'), delta (1B-beta), and gamma (1B-gamma).

Its function is as follows. EF-1-beta and EF-1-delta stimulate the exchange of GDP bound to EF-1-alpha to GTP. The sequence is that of Elongation factor 1-beta 2 from Arabidopsis thaliana (Mouse-ear cress).